Here is an 84-residue protein sequence, read N- to C-terminus: Beta-mammal/insect toxin Ts1 (84 aa).

The N-terminal stretch at 1-20 (MKGMILFISCLLLIGIVVEC) is a signal peptide. The LCN-type CS-alpha/beta domain occupies 21–82 (KEGYLMDHEG…VWDRATNKCG (62 aa)). Cystine bridges form between cysteine 31/cysteine 81, cysteine 35/cysteine 57, cysteine 43/cysteine 62, and cysteine 47/cysteine 64. Cysteine 81 carries the cysteine amide modification.

The protein belongs to the long (4 C-C) scorpion toxin superfamily. Sodium channel inhibitor family. In terms of processing, C-terminal amidation is important for high activity. As to expression, expressed by the venom gland.

The protein localises to the secreted. In terms of biological role, voltage-gated sodium channels (Nav) gating-modifier. Acts both as alpha- and beta-toxin, since it affects not only activation but also inactivation of Nav channels. Binds to Nav domain DII and impairs the four Nav channel voltage sensors movements. Depending on Nav channel subtypes tested, can also bind Nav domains DIII (low affinity) and DIV (very low affinity). Acts on almost all the Nav channels tested (mammalian Nav1.2/SCN2A, Nav1.3/SCN3A, Nav1.4/SCN4A, Nav1.5/SCN5A, Nav1.6/SCN8A, Nav1.9/SCN11A, and insect DmNav1). Is highly active against both mammals and insects. Irreversibly modulates DmNav channels. Other Ts1 activities have been studied, such as immunomodulation, antimicrobial activity or exocrine secretion. This toxin exhibits an antifungal activity against filamentous fungi. In vitro, it has an important immunomodulatory effect on macrophages by stimulating the release of pro-inflammatory cytokines. It also shows an activity in exocrine secretion in pancreas, stomach and adrenal gland. In Tityus serrulatus (Brazilian scorpion), this protein is Beta-mammal/insect toxin Ts1.